Reading from the N-terminus, the 154-residue chain is Crossover junction endodeoxyribonuclease RuvC (154 aa).

Catalysis depends on residues aspartate 7, glutamate 67, and aspartate 139. Aspartate 7, glutamate 67, and aspartate 139 together coordinate Mg(2+).

It belongs to the RuvC family. As to quaternary structure, homodimer which binds Holliday junction (HJ) DNA. The HJ becomes 2-fold symmetrical on binding to RuvC with unstacked arms; it has a different conformation from HJ DNA in complex with RuvA. In the full resolvosome a probable DNA-RuvA(4)-RuvB(12)-RuvC(2) complex forms which resolves the HJ. Requires Mg(2+) as cofactor.

The protein resides in the cytoplasm. The enzyme catalyses Endonucleolytic cleavage at a junction such as a reciprocal single-stranded crossover between two homologous DNA duplexes (Holliday junction).. Its function is as follows. The RuvA-RuvB-RuvC complex processes Holliday junction (HJ) DNA during genetic recombination and DNA repair. Endonuclease that resolves HJ intermediates. Cleaves cruciform DNA by making single-stranded nicks across the HJ at symmetrical positions within the homologous arms, yielding a 5'-phosphate and a 3'-hydroxyl group; requires a central core of homology in the junction. The consensus cleavage sequence is 5'-(A/T)TT(C/G)-3'. Cleavage occurs on the 3'-side of the TT dinucleotide at the point of strand exchange. HJ branch migration catalyzed by RuvA-RuvB allows RuvC to scan DNA until it finds its consensus sequence, where it cleaves and resolves the cruciform DNA. This is Crossover junction endodeoxyribonuclease RuvC from Prochlorococcus marinus (strain MIT 9313).